The chain runs to 307 residues: Acyl transferase (307 aa).

Residues serine 116, aspartate 213, and histidine 243 each act as charge relay system in the active site.

This sequence belongs to the LuxD family.

The protein operates within lipid metabolism; fatty acid reduction for biolumincescence. Acyl transferase is part of the fatty acid reductase system required for aldehyde biosynthesis; it produces fatty acids for the luminescent reaction. The protein is Acyl transferase of Aliivibrio fischeri (Vibrio fischeri).